Here is a 159-residue protein sequence, read N- to C-terminus: Transcription elongation factor GreA (159 aa).

Residues 45–67 (NAEYHEARKEQSFVEGKIRELQL) are a coiled coil.

The protein belongs to the GreA/GreB family.

Its function is as follows. Necessary for efficient RNA polymerase transcription elongation past template-encoded arresting sites. The arresting sites in DNA have the property of trapping a certain fraction of elongating RNA polymerases that pass through, resulting in locked ternary complexes. Cleavage of the nascent transcript by cleavage factors such as GreA or GreB allows the resumption of elongation from the new 3'terminus. GreA releases sequences of 2 to 3 nucleotides. The polypeptide is Transcription elongation factor GreA (Neorickettsia sennetsu (strain ATCC VR-367 / Miyayama) (Ehrlichia sennetsu)).